A 387-amino-acid polypeptide reads, in one-letter code: Galactokinase (387 aa).

33 to 36 (EHID) is a substrate binding site. Residues Ser67 and 124–130 (GAGLSSS) each bind ATP. Residues Ser130 and Glu162 each coordinate Mg(2+). Asp174 serves as the catalytic Proton acceptor. Residue Tyr224 participates in substrate binding.

The protein belongs to the GHMP kinase family. GalK subfamily.

Its subcellular location is the cytoplasm. The enzyme catalyses alpha-D-galactose + ATP = alpha-D-galactose 1-phosphate + ADP + H(+). It participates in carbohydrate metabolism; galactose metabolism. Catalyzes the transfer of the gamma-phosphate of ATP to D-galactose to form alpha-D-galactose-1-phosphate (Gal-1-P). The polypeptide is Galactokinase (Clostridium perfringens (strain SM101 / Type A)).